We begin with the raw amino-acid sequence, 298 residues long: ATP phosphoribosyltransferase (298 aa).

Belongs to the ATP phosphoribosyltransferase family. Long subfamily. It depends on Mg(2+) as a cofactor.

It is found in the cytoplasm. The catalysed reaction is 1-(5-phospho-beta-D-ribosyl)-ATP + diphosphate = 5-phospho-alpha-D-ribose 1-diphosphate + ATP. Its pathway is amino-acid biosynthesis; L-histidine biosynthesis; L-histidine from 5-phospho-alpha-D-ribose 1-diphosphate: step 1/9. With respect to regulation, feedback inhibited by histidine. In terms of biological role, catalyzes the condensation of ATP and 5-phosphoribose 1-diphosphate to form N'-(5'-phosphoribosyl)-ATP (PR-ATP). Has a crucial role in the pathway because the rate of histidine biosynthesis seems to be controlled primarily by regulation of HisG enzymatic activity. The sequence is that of ATP phosphoribosyltransferase (hisG) from Photobacterium profundum (strain SS9).